We begin with the raw amino-acid sequence, 534 residues long: Cytokinin dehydrogenase 5 (534 aa).

The first 20 residues, 1–20 (MAWCLVFMVFLIYCLISTVG), serve as a signal peptide directing secretion. One can recognise an FAD-binding PCMH-type domain in the interval 59–243 (TSAEPLAVFH…TRARIALEPA (185 aa)). Residues A93, G95, and G97 each contribute to the FAD site. H98 is subject to Pros-8alpha-FAD histidine. FAD-binding residues include S99 and Q103. N-linked (GlcNAc...) asparagine glycosylation occurs at N152. D167, S172, S178, I182, and I233 together coordinate FAD. N256 is a glycosylation site (N-linked (GlcNAc...) asparagine). FAD-binding residues include Y484 and Q522.

The protein belongs to the oxygen-dependent FAD-linked oxidoreductase family. As to quaternary structure, monomer. The cofactor is FAD. As to expression, expressed in inflorescence meristems.

It localises to the secreted. It is found in the extracellular space. It catalyses the reaction N(6)-dimethylallyladenine + A + H2O = 3-methyl-2-butenal + adenine + AH2. Catalyzes the oxidation of cytokinins, a family of N(6)-substituted adenine derivatives that are plant hormones, where the substituent is an isopentenyl group. This is Cytokinin dehydrogenase 5 (CKX5) from Oryza sativa subsp. japonica (Rice).